Here is a 158-residue protein sequence, read N- to C-terminus: Methylated-DNA--protein-cysteine methyltransferase (158 aa).

Residue C126 is the Nucleophile; methyl group acceptor of the active site.

The protein belongs to the MGMT family.

It is found in the cytoplasm. It catalyses the reaction a 6-O-methyl-2'-deoxyguanosine in DNA + L-cysteinyl-[protein] = S-methyl-L-cysteinyl-[protein] + a 2'-deoxyguanosine in DNA. It carries out the reaction a 4-O-methyl-thymidine in DNA + L-cysteinyl-[protein] = a thymidine in DNA + S-methyl-L-cysteinyl-[protein]. Functionally, involved in the cellular defense against the biological effects of O6-methylguanine (O6-MeG) and O4-methylthymine (O4-MeT) in DNA. Repairs the methylated nucleobase in DNA by stoichiometrically transferring the methyl group to a cysteine residue in the enzyme. This is a suicide reaction: the enzyme is irreversibly inactivated. The protein is Methylated-DNA--protein-cysteine methyltransferase of Methanosarcina mazei (strain ATCC BAA-159 / DSM 3647 / Goe1 / Go1 / JCM 11833 / OCM 88) (Methanosarcina frisia).